The following is a 450-amino-acid chain: Bifunctional protein GlmU (450 aa).

The segment at 1-221 (MRCIVLAAGM…SCEFIGINNR (221 aa)) is pyrophosphorylase. Residues 6–9 (LAAG), Lys-20, Gln-69, 74–75 (GT), 96–98 (YGD), Gly-135, Glu-150, Asn-165, and Asn-219 contribute to the UDP-N-acetyl-alpha-D-glucosamine site. Position 98 (Asp-98) interacts with Mg(2+). Mg(2+) is bound at residue Asn-219. The segment at 222–242 (IQLAQAEKFRRQWILEELMIK) is linker. Residues 243–450 (GVTIVDPETT…VIDKRKKEED (208 aa)) form an N-acetyltransferase region. The UDP-N-acetyl-alpha-D-glucosamine site is built by Arg-324 and Lys-342. The active-site Proton acceptor is the His-354. Residues Tyr-357 and Asn-368 each coordinate UDP-N-acetyl-alpha-D-glucosamine. 4 residues coordinate acetyl-CoA: Ala-371, Ser-396, Ala-414, and Arg-431.

In the N-terminal section; belongs to the N-acetylglucosamine-1-phosphate uridyltransferase family. It in the C-terminal section; belongs to the transferase hexapeptide repeat family. As to quaternary structure, homotrimer. Mg(2+) serves as cofactor.

The protein localises to the cytoplasm. The catalysed reaction is alpha-D-glucosamine 1-phosphate + acetyl-CoA = N-acetyl-alpha-D-glucosamine 1-phosphate + CoA + H(+). The enzyme catalyses N-acetyl-alpha-D-glucosamine 1-phosphate + UTP + H(+) = UDP-N-acetyl-alpha-D-glucosamine + diphosphate. The protein operates within nucleotide-sugar biosynthesis; UDP-N-acetyl-alpha-D-glucosamine biosynthesis; N-acetyl-alpha-D-glucosamine 1-phosphate from alpha-D-glucosamine 6-phosphate (route II): step 2/2. It participates in nucleotide-sugar biosynthesis; UDP-N-acetyl-alpha-D-glucosamine biosynthesis; UDP-N-acetyl-alpha-D-glucosamine from N-acetyl-alpha-D-glucosamine 1-phosphate: step 1/1. It functions in the pathway bacterial outer membrane biogenesis; LPS lipid A biosynthesis. In terms of biological role, catalyzes the last two sequential reactions in the de novo biosynthetic pathway for UDP-N-acetylglucosamine (UDP-GlcNAc). The C-terminal domain catalyzes the transfer of acetyl group from acetyl coenzyme A to glucosamine-1-phosphate (GlcN-1-P) to produce N-acetylglucosamine-1-phosphate (GlcNAc-1-P), which is converted into UDP-GlcNAc by the transfer of uridine 5-monophosphate (from uridine 5-triphosphate), a reaction catalyzed by the N-terminal domain. The sequence is that of Bifunctional protein GlmU from Pseudothermotoga lettingae (strain ATCC BAA-301 / DSM 14385 / NBRC 107922 / TMO) (Thermotoga lettingae).